The sequence spans 72 residues: Translation initiation factor IF-1 (72 aa).

One can recognise an S1-like domain in the interval 1-72; sequence MSKEDSIEVT…TKGRITFRHR (72 aa).

It belongs to the IF-1 family. In terms of assembly, component of the 30S ribosomal translation pre-initiation complex which assembles on the 30S ribosome in the order IF-2 and IF-3, IF-1 and N-formylmethionyl-tRNA(fMet); mRNA recruitment can occur at any time during PIC assembly.

The protein localises to the cytoplasm. In terms of biological role, one of the essential components for the initiation of protein synthesis. Stabilizes the binding of IF-2 and IF-3 on the 30S subunit to which N-formylmethionyl-tRNA(fMet) subsequently binds. Helps modulate mRNA selection, yielding the 30S pre-initiation complex (PIC). Upon addition of the 50S ribosomal subunit IF-1, IF-2 and IF-3 are released leaving the mature 70S translation initiation complex. The chain is Translation initiation factor IF-1 from Solibacter usitatus (strain Ellin6076).